The following is a 485-amino-acid chain: tRNA-2-methylthio-N(6)-dimethylallyladenosine synthase (485 aa).

An MTTase N-terminal domain is found at 37 to 154; it reads GKLYIKTHGC…LPELIRARRE (118 aa). 6 residues coordinate [4Fe-4S] cluster: Cys46, Cys83, Cys117, Cys191, Cys195, and Cys198. Residues 177–416 enclose the Radical SAM core domain; the sequence is RADGPSAFVS…HINAHAAGIS (240 aa). The 64-residue stretch at 417–480 folds into the TRAM domain; that stretch reads QRMVGSVQRV…SNSLRGRIQL (64 aa).

Belongs to the methylthiotransferase family. MiaB subfamily. In terms of assembly, monomer. It depends on [4Fe-4S] cluster as a cofactor.

Its subcellular location is the cytoplasm. The enzyme catalyses N(6)-dimethylallyladenosine(37) in tRNA + (sulfur carrier)-SH + AH2 + 2 S-adenosyl-L-methionine = 2-methylsulfanyl-N(6)-dimethylallyladenosine(37) in tRNA + (sulfur carrier)-H + 5'-deoxyadenosine + L-methionine + A + S-adenosyl-L-homocysteine + 2 H(+). Its function is as follows. Catalyzes the methylthiolation of N6-(dimethylallyl)adenosine (i(6)A), leading to the formation of 2-methylthio-N6-(dimethylallyl)adenosine (ms(2)i(6)A) at position 37 in tRNAs that read codons beginning with uridine. The protein is tRNA-2-methylthio-N(6)-dimethylallyladenosine synthase of Xanthomonas campestris pv. campestris (strain 8004).